Reading from the N-terminus, the 951-residue chain is Valine--tRNA ligase (951 aa).

The 'HIGH' region motif lies at 40–50 (PNVTGSLHMGH). Positions 551 to 555 (KMSKS) match the 'KMSKS' region motif. ATP is bound at residue Lys554. The stretch at 879-950 (MAGLIDVEAE…LLEQKAKIES (72 aa)) forms a coiled coil.

It belongs to the class-I aminoacyl-tRNA synthetase family. ValS type 1 subfamily. As to quaternary structure, monomer.

It localises to the cytoplasm. The enzyme catalyses tRNA(Val) + L-valine + ATP = L-valyl-tRNA(Val) + AMP + diphosphate. Its function is as follows. Catalyzes the attachment of valine to tRNA(Val). As ValRS can inadvertently accommodate and process structurally similar amino acids such as threonine, to avoid such errors, it has a 'posttransfer' editing activity that hydrolyzes mischarged Thr-tRNA(Val) in a tRNA-dependent manner. The chain is Valine--tRNA ligase from Pseudoalteromonas translucida (strain TAC 125).